A 93-amino-acid chain; its full sequence is Small ribosomal subunit protein uS19 (93 aa).

It belongs to the universal ribosomal protein uS19 family.

In terms of biological role, protein S19 forms a complex with S13 that binds strongly to the 16S ribosomal RNA. In Mycolicibacterium paratuberculosis (strain ATCC BAA-968 / K-10) (Mycobacterium paratuberculosis), this protein is Small ribosomal subunit protein uS19.